The primary structure comprises 1026 residues: Major inner capsid protein VP3 (1026 aa).

The tract at residues 60–96 (FENKDKPEVVEASSNKKEEKVSEPKVEEKKDPEPEKD) is disordered.

It is found in the virion. In terms of biological role, self-assembles to form an icosahedral capsid with a pseudo T=2 symmetry, about 60 nm in diameter, and consisting of 120 VP3 subunits. The capsid encapsulates the genomic RNA. This is Major inner capsid protein VP3 (S3) from Micromonas pusilla (Picoplanktonic green alga).